A 363-amino-acid polypeptide reads, in one-letter code: NAD kinase 1 (363 aa).

Aspartate 68 functions as the Proton acceptor in the catalytic mechanism. Residues 68-69 (DG), arginine 73, 175-176 (ND), arginine 186, aspartate 205, alanine 240, and glutamine 275 each bind NAD(+).

Belongs to the NAD kinase family. A divalent metal cation serves as cofactor.

The protein localises to the cytoplasm. The enzyme catalyses NAD(+) + ATP = ADP + NADP(+) + H(+). Its function is as follows. Involved in the regulation of the intracellular balance of NAD and NADP, and is a key enzyme in the biosynthesis of NADP. Catalyzes specifically the phosphorylation on 2'-hydroxyl of the adenosine moiety of NAD to yield NADP. The sequence is that of NAD kinase 1 from Streptomyces coelicolor (strain ATCC BAA-471 / A3(2) / M145).